Here is a 101-residue protein sequence, read N- to C-terminus: Ubiquitin-related modifier 1 (101 aa).

G101 is subject to 1-thioglycine. Residue G101 forms a Glycyl lysine isopeptide (Gly-Lys) (interchain with K-? in acceptor proteins) linkage.

It belongs to the URM1 family. In terms of assembly, component of a complex at least composed of URM1, CTU2/NCS2 and CTU1/ATPBD3. Post-translationally, C-terminal thiocarboxylation occurs in 2 steps, it is first acyl-adenylated (-COAMP) via the hesA/moeB/thiF part of MOCS3, then thiocarboxylated (-COSH) via the rhodanese domain of MOCS3.

It localises to the cytoplasm. The protein operates within tRNA modification; 5-methoxycarbonylmethyl-2-thiouridine-tRNA biosynthesis. Its function is as follows. Acts as a sulfur carrier required for 2-thiolation of mcm(5)S(2)U at tRNA wobble positions of cytosolic tRNA(Lys), tRNA(Glu) and tRNA(Gln). Serves as sulfur donor in tRNA 2-thiolation reaction by being thiocarboxylated (-COSH) at its C-terminus by MOCS3. The sulfur is then transferred to tRNA to form 2-thiolation of mcm(5)S(2)U. Also acts as a ubiquitin-like protein (UBL) that is covalently conjugated via an isopeptide bond to lysine residues of target proteins such as MOCS3, ATPBD3, CTU2, USP15 and CAS. The thiocarboxylated form serves as substrate for conjugation and oxidative stress specifically induces the formation of UBL-protein conjugates. The polypeptide is Ubiquitin-related modifier 1 (Homo sapiens (Human)).